Reading from the N-terminus, the 85-residue chain is Sec-independent protein translocase protein TatA (85 aa).

The chain crosses the membrane as a helical span at residues methionine 1–glycine 21. The disordered stretch occupies residues methionine 43 to alanine 85. Basic and acidic residues predominate over residues aspartate 46–alanine 57. Residues alanine 58–alanine 73 show a composition bias toward low complexity. Basic and acidic residues predominate over residues threonine 74–alanine 85.

It belongs to the TatA/E family. As to quaternary structure, the Tat system comprises two distinct complexes: a TatABC complex, containing multiple copies of TatA, TatB and TatC subunits, and a separate TatA complex, containing only TatA subunits. Substrates initially bind to the TatABC complex, which probably triggers association of the separate TatA complex to form the active translocon.

Its subcellular location is the cell inner membrane. Part of the twin-arginine translocation (Tat) system that transports large folded proteins containing a characteristic twin-arginine motif in their signal peptide across membranes. TatA could form the protein-conducting channel of the Tat system. This is Sec-independent protein translocase protein TatA from Shewanella sp. (strain ANA-3).